Here is a 388-residue protein sequence, read N- to C-terminus: Chorismate synthase (388 aa).

NADP(+) is bound by residues arginine 39 and arginine 45. Residues 132–134, 251–252, glycine 296, 311–315, and arginine 337 contribute to the FMN site; these read RSS, NA, and KPIPT.

The protein belongs to the chorismate synthase family. As to quaternary structure, homotetramer. FMNH2 is required as a cofactor.

The enzyme catalyses 5-O-(1-carboxyvinyl)-3-phosphoshikimate = chorismate + phosphate. It participates in metabolic intermediate biosynthesis; chorismate biosynthesis; chorismate from D-erythrose 4-phosphate and phosphoenolpyruvate: step 7/7. In terms of biological role, catalyzes the anti-1,4-elimination of the C-3 phosphate and the C-6 proR hydrogen from 5-enolpyruvylshikimate-3-phosphate (EPSP) to yield chorismate, which is the branch point compound that serves as the starting substrate for the three terminal pathways of aromatic amino acid biosynthesis. This reaction introduces a second double bond into the aromatic ring system. In Staphylococcus aureus (strain Mu50 / ATCC 700699), this protein is Chorismate synthase.